Consider the following 490-residue polypeptide: NAI2-like protein (490 aa).

A signal peptide spans 1–24 (MGRKYVVLGLAVCLFLSSFNEVSC). Disordered regions lie at residues 43 to 83 (EEGE…VDKF) and 155 to 206 (AATN…FNKG). Positions 136–163 (IADERRQRLEDIERKLKAAAATNIVVED) form a coiled coil. The span at 171-183 (KVEETQEVVKFES) shows a compositional bias: basic and acidic residues. Low complexity predominate over residues 184–199 (ESSSASSESRRQSSSS). The stretch at 433–465 (TFEKTVANLSRVIEEASQAYEEYHVVVRKWKEE) forms a coiled coil.

In Arabidopsis thaliana (Mouse-ear cress), this protein is NAI2-like protein.